The sequence spans 196 residues: MADS-box protein FLOWERING LOCUS C (196 aa).

An MADS-box domain is found at 1–61 (MGRKKLEIKR…GKLYSFSSGD (61 aa)). The short motif at 8 to 15 (IKRIENKS) is the Nuclear localization signal element. The 91-residue stretch at 80-170 (ALDHQSKALN…ASQMENNHHV (91 aa)) folds into the K-box domain.

In terms of tissue distribution, high expression in the vegetative apex and in root tissue and lower expression in leaves and stems. Not detected in young tissues of the inflorescence. Before fertilization, expressed in ovules, but not in pollen or stamens, of non-vernalized plants. After vernalization, not detected in ovules.

Its subcellular location is the nucleus. Its function is as follows. Putative transcription factor that seems to play a central role in the regulation of flowering time in the late-flowering phenotype by interacting with 'FRIGIDA', the autonomous and the vernalization flowering pathways. Inhibits flowering by repressing 'SUPPRESSOR OF OVEREXPRESSION OF CONSTANS 1'. At elevated temperatures (e.g. 29 degrees Celsius), maintained at high levels in a JMJ30/JMJ32-dependent manner to prevent extreme precocious flowering. The sequence is that of MADS-box protein FLOWERING LOCUS C from Arabidopsis thaliana (Mouse-ear cress).